A 492-amino-acid polypeptide reads, in one-letter code: MKATDNTTTGPGWNFDNSYARLPDYLYTRLDPTPVRAPQMAIFNSSLSDALGLATNTLAGDEGVAIFSGNRIPEGAQPICQAYAGHQFGYFTMLGDGRAHLLGEHITPTGQRFDIQLKGSGRTPFSRSGDGRAVLGPMLREYIISEAMHALGISTTRSLAVVTTGEPVYRETPLPGAILTRVAASHIRVGTFEYLAAQGNRDGIRTLAEYTIHRHFPELLQADNPFLALLQTVLEKQVELVVRWLHVGFIHGVMNTDNMALCGESIDYGPCAFMDSYDPDTVFSSIDQDGRYAFARQPAMAQWNVTRFAETLLPVLHDEGEKAVELANRSLATFPDIFQRLRMDGMRAKLGLFTKEDADMSLMQDLLTCMQQNQADYTNTLRDLALETLPDTPFFREPSFTAWHQRWQTRLTRQEEPVEASRALMRAHNPAFIPRNHRVEEALAAAQERHDFTVLEKLLEVLSRPYDDQPEHAEYRQPPPPSEKPYQTFCGT.

Positions 95, 97, 98, 118, 130, 131, 181, and 188 each coordinate ATP. Residue Asp-257 is the Proton acceptor of the active site. Mg(2+)-binding residues include Asn-258 and Asp-267. Asp-267 lines the ATP pocket. Residues 466-475 (YDDQPEHAEY) show a composition bias toward basic and acidic residues. Positions 466–492 (YDDQPEHAEYRQPPPPSEKPYQTFCGT) are disordered.

It belongs to the SELO family. The cofactor is Mg(2+). It depends on Mn(2+) as a cofactor.

It catalyses the reaction L-seryl-[protein] + ATP = 3-O-(5'-adenylyl)-L-seryl-[protein] + diphosphate. The catalysed reaction is L-threonyl-[protein] + ATP = 3-O-(5'-adenylyl)-L-threonyl-[protein] + diphosphate. The enzyme catalyses L-tyrosyl-[protein] + ATP = O-(5'-adenylyl)-L-tyrosyl-[protein] + diphosphate. It carries out the reaction L-histidyl-[protein] + UTP = N(tele)-(5'-uridylyl)-L-histidyl-[protein] + diphosphate. It catalyses the reaction L-seryl-[protein] + UTP = O-(5'-uridylyl)-L-seryl-[protein] + diphosphate. The catalysed reaction is L-tyrosyl-[protein] + UTP = O-(5'-uridylyl)-L-tyrosyl-[protein] + diphosphate. Nucleotidyltransferase involved in the post-translational modification of proteins. It can catalyze the addition of adenosine monophosphate (AMP) or uridine monophosphate (UMP) to a protein, resulting in modifications known as AMPylation and UMPylation. This is Protein nucleotidyltransferase YdiU from Syntrophotalea carbinolica (strain DSM 2380 / NBRC 103641 / GraBd1) (Pelobacter carbinolicus).